The primary structure comprises 227 residues: PKHD-type hydroxylase M446_1130 (227 aa).

Positions 78–178 (QIFPPLFNRY…RVASFFWLQS (101 aa)) constitute a Fe2OG dioxygenase domain. Fe cation-binding residues include His-96, Asp-98, and His-159. 2-oxoglutarate is bound at residue Arg-169.

Fe(2+) serves as cofactor. The cofactor is L-ascorbate.

The sequence is that of PKHD-type hydroxylase M446_1130 from Methylobacterium sp. (strain 4-46).